The primary structure comprises 252 residues: 3-dehydroquinate dehydratase (252 aa).

Residues 46-48 (EWR) and arginine 82 each bind 3-dehydroquinate. Histidine 143 acts as the Proton donor/acceptor in catalysis. The Schiff-base intermediate with substrate role is filled by lysine 170. Residues arginine 212, serine 231, and glutamine 235 each coordinate 3-dehydroquinate.

This sequence belongs to the type-I 3-dehydroquinase family. As to quaternary structure, homodimer.

The catalysed reaction is 3-dehydroquinate = 3-dehydroshikimate + H2O. The protein operates within metabolic intermediate biosynthesis; chorismate biosynthesis; chorismate from D-erythrose 4-phosphate and phosphoenolpyruvate: step 3/7. Functionally, involved in the third step of the chorismate pathway, which leads to the biosynthesis of aromatic amino acids. Catalyzes the cis-dehydration of 3-dehydroquinate (DHQ) and introduces the first double bond of the aromatic ring to yield 3-dehydroshikimate. The polypeptide is 3-dehydroquinate dehydratase (Listeria monocytogenes serovar 1/2a (strain ATCC BAA-679 / EGD-e)).